We begin with the raw amino-acid sequence, 446 residues long: Phosphoglucosamine mutase (446 aa).

Ser101 serves as the catalytic Phosphoserine intermediate. Mg(2+) contacts are provided by Ser101, Asp240, Asp242, and Asp244. Ser101 carries the phosphoserine modification.

The protein belongs to the phosphohexose mutase family. Requires Mg(2+) as cofactor. In terms of processing, activated by phosphorylation.

The enzyme catalyses alpha-D-glucosamine 1-phosphate = D-glucosamine 6-phosphate. In terms of biological role, catalyzes the conversion of glucosamine-6-phosphate to glucosamine-1-phosphate. This Coxiella burnetii (strain RSA 331 / Henzerling II) protein is Phosphoglucosamine mutase.